An 86-amino-acid chain; its full sequence is Cell division topological specificity factor (86 aa).

Belongs to the MinE family.

Functionally, prevents the cell division inhibition by proteins MinC and MinD at internal division sites while permitting inhibition at polar sites. This ensures cell division at the proper site by restricting the formation of a division septum at the midpoint of the long axis of the cell. The sequence is that of Cell division topological specificity factor from Stenotrophomonas maltophilia (strain R551-3).